The following is a 432-amino-acid chain: Enolase (432 aa).

(2R)-2-phosphoglycerate is bound at residue Q163. The active-site Proton donor is E205. Residues D242, E285, and D312 each coordinate Mg(2+). 4 residues coordinate (2R)-2-phosphoglycerate: K337, R366, S367, and K388. The active-site Proton acceptor is K337.

This sequence belongs to the enolase family. It depends on Mg(2+) as a cofactor.

It localises to the cytoplasm. Its subcellular location is the secreted. The protein resides in the cell surface. It carries out the reaction (2R)-2-phosphoglycerate = phosphoenolpyruvate + H2O. It participates in carbohydrate degradation; glycolysis; pyruvate from D-glyceraldehyde 3-phosphate: step 4/5. Its function is as follows. Catalyzes the reversible conversion of 2-phosphoglycerate (2-PG) into phosphoenolpyruvate (PEP). It is essential for the degradation of carbohydrates via glycolysis. The protein is Enolase of Desulfovibrio desulfuricans (strain ATCC 27774 / DSM 6949 / MB).